The chain runs to 130 residues: Protein ApaG (130 aa).

One can recognise an ApaG domain in the interval 3–127 (RALTRDIEVV…FSLDSPGLLR (125 aa)). Positions 63-83 (EVTGPGVVGEQPRLSPGDTYE) are disordered.

This Rhizobium etli (strain ATCC 51251 / DSM 11541 / JCM 21823 / NBRC 15573 / CFN 42) protein is Protein ApaG.